An 81-amino-acid chain; its full sequence is Conotoxin Lt6.4 (81 aa).

The N-terminal stretch at 1–19 is a signal peptide; the sequence is MKLVLAIVLILMFLSLSAG. Positions 20 to 42 are excised as a propeptide; that stretch reads AETSDNGVSRGGHRPQYWPVTPP. 3 disulfides stabilise this stretch: C46-C60, C53-C65, and C59-C80.

The protein belongs to the conotoxin I3 superfamily. In terms of tissue distribution, expressed by the venom duct.

The protein resides in the secreted. The protein is Conotoxin Lt6.4 of Conus litteratus (Lettered cone).